The sequence spans 621 residues: DNA mismatch repair protein MutL (621 aa).

The protein belongs to the DNA mismatch repair MutL/HexB family.

This protein is involved in the repair of mismatches in DNA. It is required for dam-dependent methyl-directed DNA mismatch repair. May act as a 'molecular matchmaker', a protein that promotes the formation of a stable complex between two or more DNA-binding proteins in an ATP-dependent manner without itself being part of a final effector complex. This chain is DNA mismatch repair protein MutL, found in Petrotoga mobilis (strain DSM 10674 / SJ95).